Here is a 349-residue protein sequence, read N- to C-terminus: Deoxyguanosinetriphosphate triphosphohydrolase-like protein (349 aa).

Residues 80–197 enclose the HD domain; that stretch reads RLTHTLEVAQ…VKYSDKIAYV (118 aa).

The protein belongs to the dGTPase family. Type 2 subfamily.

This Clostridium tetani (strain Massachusetts / E88) protein is Deoxyguanosinetriphosphate triphosphohydrolase-like protein.